The chain runs to 243 residues: tRNA (guanine-N(1)-)-methyltransferase (243 aa).

Residues G108 and 127-132 (LGDFVL) contribute to the S-adenosyl-L-methionine site.

This sequence belongs to the RNA methyltransferase TrmD family. Homodimer.

Its subcellular location is the cytoplasm. The enzyme catalyses guanosine(37) in tRNA + S-adenosyl-L-methionine = N(1)-methylguanosine(37) in tRNA + S-adenosyl-L-homocysteine + H(+). Its function is as follows. Specifically methylates guanosine-37 in various tRNAs. This Streptococcus pyogenes serotype M2 (strain MGAS10270) protein is tRNA (guanine-N(1)-)-methyltransferase.